Consider the following 432-residue polypeptide: Septin-14 (432 aa).

The region spanning 49–315 is the Septin-type G domain; sequence QGFTFNILCV…ECYRYQKLQK (267 aa). The interval 59–66 is G1 motif; it reads GETGIGKS. Residues 59-66, Gly-114, 195-203, Gly-249, and Arg-264 contribute to the GTP site; these read GETGIGKS and KADTISKND. Positions 111–114 are G3 motif; it reads ETVG. Residues 194 to 197 are G4 motif; sequence AKAD. Residues 332 to 412 adopt a coiled-coil conformation; it reads EIFEAKRQEF…IIDFYKMKAA (81 aa). The interval 369–432 is required for interaction with SEPTIN4. Required for migration of cortical neurons during corticogenesis; sequence EAEKELQDKF…DTKKDKHRKK (64 aa).

The protein belongs to the TRAFAC class TrmE-Era-EngA-EngB-Septin-like GTPase superfamily. Septin GTPase family. Septins polymerize into heterooligomeric protein complexes that form filaments, and can associate with cellular membranes, actin filaments and microtubules. GTPase activity is required for filament formation. Interacts with ACTN4. Interacts with SEPTIN9. Interacts (via C-terminus) with SEPTIN4. As to expression, testis-specific (at protein level).

Its subcellular location is the cytoplasm. The protein localises to the cytoskeleton. It localises to the cell projection. The protein resides in the axon. It is found in the dendrite. Its subcellular location is the perikaryon. The protein localises to the perinuclear region. It localises to the cytoplasmic vesicle. The protein resides in the secretory vesicle. It is found in the acrosome. Functionally, filament-forming cytoskeletal GTPase. Involved in the migration of cortical neurons and the formation of neuron leading processes during embryonic development. Plays a role in sperm head formation during spermiogenesis, potentially via facilitating localization of ACTN4 to cell filaments. The sequence is that of Septin-14 from Homo sapiens (Human).